Consider the following 245-residue polypeptide: Fibroblast growth factor 13 (245 aa).

Positions 1 to 36 are disordered; sequence MAAAIASSLIRQKRQAREREKSNACKCVSSPSKGKT. The interval 1–62 is mediates targeting to the nucleus; it reads MAAAIASSLI…GSKKRRRRRP (62 aa). The mediates interaction with sodium channels stretch occupies residues 67-201; it reads KGIVTKLYSR…AHFLPKPLKV (135 aa). Position 208 is a phosphoserine (Ser-208). The disordered stretch occupies residues 213 to 245; the sequence is TEFSRSGSGTPTKSRSVSGVLNGGKSMSHNEST. Residues 215 to 245 are compositionally biased toward polar residues; sequence FSRSGSGTPTKSRSVSGVLNGGKSMSHNEST.

This sequence belongs to the heparin-binding growth factors family. As to quaternary structure, interacts with SCN8A; regulates SCN8A activity. Interacts with SCN1A; may regulate SCN1A activity. Interacts with SCN5A; the interaction is direct and may regulate SNC5A density at membranes and function. May also interact with SCN2A and SCN11A. Interacts with MAPK8IP2; may regulate the MAPK8IP2 scaffolding activity. May be phosphorylated. In terms of tissue distribution, ubiquitously expressed. Predominantly expressed in the nervous system.

The protein localises to the nucleus. The protein resides in the cytoplasm. Its subcellular location is the cell projection. It is found in the filopodium. It localises to the growth cone. The protein localises to the dendrite. The protein resides in the cell membrane. Its subcellular location is the sarcolemma. Its function is as follows. Microtubule-binding protein which directly binds tubulin and is involved in both polymerization and stabilization of microtubules. Through its action on microtubules, may participate in the refinement of axons by negatively regulating axonal and leading processes branching. Plays a crucial role in neuron polarization and migration in the cerebral cortex and the hippocampus. Regulates voltage-gated sodium channel transport and function. May also play a role in MAPK signaling. Required for the development of axonal initial segment-targeting inhibitory GABAergic synapses made by chandelier neurons. This is Fibroblast growth factor 13 from Homo sapiens (Human).